The sequence spans 335 residues: NADH-quinone oxidoreductase subunit H (335 aa).

Transmembrane regions (helical) follow at residues 15-35 (VVKA…LSFV), 81-101 (MIFT…FSII), 114-134 (IGLL…LFAG), 154-174 (VSYE…VGSF), 187-207 (LWFI…GVAV), 238-258 (FFVG…TLFF), 270-290 (QVPF…FILL), and 307-327 (WKFC…IVLY).

It belongs to the complex I subunit 1 family. NDH-1 is composed of 13 different subunits. Subunits NuoA, H, J, K, L, M, N constitute the membrane sector of the complex.

The protein localises to the cell inner membrane. The catalysed reaction is a quinone + NADH + 5 H(+)(in) = a quinol + NAD(+) + 4 H(+)(out). Functionally, NDH-1 shuttles electrons from NADH, via FMN and iron-sulfur (Fe-S) centers, to quinones in the respiratory chain. The immediate electron acceptor for the enzyme in this species is believed to be ubiquinone. Couples the redox reaction to proton translocation (for every two electrons transferred, four hydrogen ions are translocated across the cytoplasmic membrane), and thus conserves the redox energy in a proton gradient. This subunit may bind ubiquinone. The polypeptide is NADH-quinone oxidoreductase subunit H (Pseudomonas putida (strain GB-1)).